The sequence spans 320 residues: Porphobilinogen deaminase (320 aa).

An S-(dipyrrolylmethanemethyl)cysteine modification is found at C241.

Belongs to the HMBS family. In terms of assembly, monomer. Dipyrromethane serves as cofactor.

The catalysed reaction is 4 porphobilinogen + H2O = hydroxymethylbilane + 4 NH4(+). Its pathway is porphyrin-containing compound metabolism; protoporphyrin-IX biosynthesis; coproporphyrinogen-III from 5-aminolevulinate: step 2/4. Functionally, tetrapolymerization of the monopyrrole PBG into the hydroxymethylbilane pre-uroporphyrinogen in several discrete steps. In Thermobifida fusca (strain YX), this protein is Porphobilinogen deaminase.